A 367-amino-acid chain; its full sequence is NAD(P)H-quinone oxidoreductase subunit 1, chloroplastic (367 aa).

The next 8 helical transmembrane spans lie at 29 to 49 (WIPL…LVVV), 96 to 116 (VLLF…SYLI), 128 to 148 (INLG…GLLM), 176 to 196 (LALC…IDIV), 204 to 224 (ILGW…IAAL), 266 to 286 (LVSA…PIPI), 304 to 324 (VISA…FLFL), and 347 to 367 (FLLP…IALL).

It belongs to the complex I subunit 1 family. As to quaternary structure, NDH is composed of at least 16 different subunits, 5 of which are encoded in the nucleus.

It localises to the plastid. The protein resides in the chloroplast thylakoid membrane. It catalyses the reaction a plastoquinone + NADH + (n+1) H(+)(in) = a plastoquinol + NAD(+) + n H(+)(out). The enzyme catalyses a plastoquinone + NADPH + (n+1) H(+)(in) = a plastoquinol + NADP(+) + n H(+)(out). Functionally, NDH shuttles electrons from NAD(P)H:plastoquinone, via FMN and iron-sulfur (Fe-S) centers, to quinones in the photosynthetic chain and possibly in a chloroplast respiratory chain. The immediate electron acceptor for the enzyme in this species is believed to be plastoquinone. Couples the redox reaction to proton translocation, and thus conserves the redox energy in a proton gradient. This is NAD(P)H-quinone oxidoreductase subunit 1, chloroplastic from Mesostigma viride (Green alga).